Reading from the N-terminus, the 120-residue chain is Protein VraC (120 aa).

This chain is Protein VraC, found in Staphylococcus epidermidis (strain ATCC 35984 / DSM 28319 / BCRC 17069 / CCUG 31568 / BM 3577 / RP62A).